The following is a 96-amino-acid chain: Conantokin-E (96 aa).

Residues 1-24 (LLVPLVTFHLILGMGTLDHGGALT) form the signal peptide. Residues 25-72 (ERRSADATALKPEPVLLQKSDARSTDDNDKDRLTQMKRILKKRGNKAR) constitute a propeptide that is removed on maturation. Positions 28–57 (SADATALKPEPVLLQKSDARSTDDNDKDRL) are disordered. Residues 44–57 (SDARSTDDNDKDRL) are compositionally biased toward basic and acidic residues. Glutamate 75, glutamate 76, glutamate 82, glutamate 86, and glutamate 95 each carry 4-carboxyglutamate. Glutamate 82 and glutamate 86 together coordinate a divalent metal cation. Cysteine 83 and cysteine 96 are disulfide-bonded.

It belongs to the conotoxin B superfamily. Expressed by the venom duct.

It localises to the secreted. In terms of biological role, conantokins inhibit N-methyl-D-aspartate (NMDA) receptors. This toxin has the highest potency for the NR2B/GRIN2B subunit, followed by NR2A/GRIN2A, NR2C/GRIN2C, and NR2D/GRIN2D subunits. The protein is Conantokin-E of Conus ermineus (Agate cone).